The sequence spans 162 residues: uncharacterized protein (162 aa).

A helical membrane pass occupies residues 5-25 (IIILFLFTAILCSITLCGCIS).

It localises to the membrane. This is an uncharacterized protein from Methanocaldococcus jannaschii (strain ATCC 43067 / DSM 2661 / JAL-1 / JCM 10045 / NBRC 100440) (Methanococcus jannaschii).